The sequence spans 443 residues: GTPase Der (443 aa).

EngA-type G domains are found at residues 3-167 and 176-349; these read PVIA…PEEK and IKIA…QSIQ. Residues 9–16, 56–60, 119–122, 182–189, 229–233, and 294–297 each bind GTP; these read GRPNVGKS, DTGGL, NKAD, DTAGI, and NKWD. Residues 350–434 form the KH-like domain; it reads QELTTGQLTR…PVHIKLKTDP (85 aa).

This sequence belongs to the TRAFAC class TrmE-Era-EngA-EngB-Septin-like GTPase superfamily. EngA (Der) GTPase family. Associates with the 50S ribosomal subunit.

GTPase that plays an essential role in the late steps of ribosome biogenesis. In Coxiella burnetii (strain CbuK_Q154) (Coxiella burnetii (strain Q154)), this protein is GTPase Der.